Consider the following 360-residue polypeptide: Phenylalanine--tRNA ligase alpha subunit (360 aa).

E260 is a binding site for Mg(2+).

The protein belongs to the class-II aminoacyl-tRNA synthetase family. Phe-tRNA synthetase alpha subunit type 1 subfamily. As to quaternary structure, tetramer of two alpha and two beta subunits. Mg(2+) is required as a cofactor.

Its subcellular location is the cytoplasm. The enzyme catalyses tRNA(Phe) + L-phenylalanine + ATP = L-phenylalanyl-tRNA(Phe) + AMP + diphosphate + H(+). This Rhodopseudomonas palustris (strain BisB5) protein is Phenylalanine--tRNA ligase alpha subunit.